A 281-amino-acid chain; its full sequence is Lectin CaBo (281 aa).

An N-terminal signal peptide occupies residues 1-29 (MAISKKSSLYLPIFTFITMLLMVVNKVSS). Position 119 (D119) interacts with Ca(2+). Position 139 (R139) interacts with a carbohydrate. Positions 149 to 163 (IIKNSTTIDFNAAYN) are cleaved as a propeptide — removed in mature form. E171 and D173 together coordinate Mn(2+). Ca(2+) is bound by residues D173, Y175, N177, and D182. Y175 provides a ligand contact to a carbohydrate. Mn(2+) is bound by residues D182 and H187. 262–263 (LY) contacts a carbohydrate.

This sequence belongs to the leguminous lectin family. In terms of assembly, equilibrium between homodimer and homotetramer. Post-translationally, the mature chain consists of residues 164-281 followed by residues 30-148. Concanavalin A-like lectins of the Diocleinae subtribe undergo proteolytic processing referred to as circular permutation. The propeptide is split into an N-terminal and a C-terminal part, the gamma and beta chain, respectively. These are then religated in beta-gamma order to form the mature alpha chain. The beta and gamma chains can often be detected in cell extracts.

In terms of biological role, D-mannose-specific lectin. The polypeptide is Lectin CaBo (Canavalia bonariensis).